The sequence spans 820 residues: MMNQDIKTIIQYPVGDVEFDIPFDYLSRKFVRVYLVSPLNRRQLNNITEYRYVSRTRIKLLVETAGFNLIEIRRFTSASERVVDFSDGSVLRATDLNVSQLQSAHIAEEARDAAMLTISPADDGSLDASGKVIKNVGTPVQSSDAATKGYVDTAVSPLATTIEANFMRTLRTSGRSIRELPGASEVAGMLLGFNGEGDPVPVVAGEGTASDVMLKLAGTTGLSYIGGVGYVTPEMMTVDGKTLVRGLGQDHVRFIQKAIDEGHRRNVPVILSGGYEVYETLHDAPLPRDDGTAYPEWVANGGDSNIRPEEQLYQKAHLRLYNNSVILGAGSQIATIRSTWARSTSAVGLTSPIMWYIEGPLGNRGTVSYVLKGIKTIGAYIGRYVVGISYRSVEDDLEFAGCGIAGVKQGEEQTIHRKIVITAYAGDVTGGWWLQRNNAYGAKYMPPYTDTDVWLLGWCDSSTYEYLSYTGYDYDGRDALVHDWISEWFDTYIFKTANSRKVSEGGRLTYQSANPYPLPTLKGITGRARYITSRYSRQNALNVINTLKTLITIRAPGYMDNSTQSCRILNAMIESVGLIRRTSGANAGNYFGIDVVDKWGADTGVWGLEGTGILEKQLVVFLRPGVPCTNAVVATGAGQIFESWTTTNAQRRLLALRDWNPATQVQTYRYDFRTDYALMRPTRYYTDGPLWNYSKGTSTPTVAVNGSTIAVQKAVTNWYRLGDIMRCNIYVEINSITLQGNSELTVTTPSFNGSWEVAGQGIGKVYLSTLTGGVTLTPVIQQGGNVVRLRKGSSPEVYAFEAGTYNNVVLIIGIDYVPLS.

The protein in the N-terminal section; belongs to the Teseptimavirus fiber family. Homotrimer.

The protein resides in the virion. Its function is as follows. Functions as a receptor binding protein (RBP) and probably mediates the attachment to the host capsular exopolysaccharides. Displays a depolymerase activity that specifically degrades the KN1-type polysaccharides of Klebsiella pneumoniae capsule, which allows the phage to reach the host cell membrane and bind the entry receptor. In Klebsiella pneumoniae (Bacteriophage KN1-1), this protein is Depolymerase, capsule KN1-specific.